The sequence spans 650 residues: Chaperone protein HtpG (650 aa).

The interval 1 to 356 (MSTRVETLEF…THDLSLNISR (356 aa)) is a; substrate-binding. The interval 222–245 (AKDRDSNDDGTAESGAGAENAGDR) is disordered. Residues 357-572 (EILQQDRRIQ…TFDMTPALEK (216 aa)) are b. Positions 573–650 (MYRAMGHEMP…LLAERLAEAL (78 aa)) are c.

It belongs to the heat shock protein 90 family. In terms of assembly, homodimer.

It localises to the cytoplasm. Molecular chaperone. Has ATPase activity. This Frankia casuarinae (strain DSM 45818 / CECT 9043 / HFP020203 / CcI3) protein is Chaperone protein HtpG.